Consider the following 492-residue polypeptide: Membrane-bound glycerophospholipid O-acyltransferase 1 (492 aa).

Transmembrane regions (helical) follow at residues 33–53, 69–89, 125–145, 179–199, 237–257, and 296–316; these read VNFV…RIYL, ILGI…LFVL, IYIF…MIVT, PSLL…AGPC, MGAV…FLTL, and YFAW…FNGM. Catalysis depends on residues asparagine 349 and histidine 380. The next 3 helical transmembrane spans lie at 370–390, 423–443, and 452–472; these read VLTF…YFTF, VVTW…FVML, and YKSV…FLPI. Serine 486 carries the phosphoserine modification.

Belongs to the membrane-bound acyltransferase family. As to expression, highly expressed in stomach, epididymis, and colon.

It is found in the endoplasmic reticulum membrane. It carries out the reaction a 1-acyl-sn-glycero-3-phosphoethanolamine + an acyl-CoA = a 1,2-diacyl-sn-glycero-3-phosphoethanolamine + CoA. It catalyses the reaction a 1-acyl-sn-glycero-3-phospho-L-serine + an acyl-CoA = a 1,2-diacyl-sn-glycero-3-phospho-L-serine + CoA. The catalysed reaction is a 1-acyl-sn-glycero-3-phosphocholine + an acyl-CoA = a 1,2-diacyl-sn-glycero-3-phosphocholine + CoA. The enzyme catalyses a 1-O-(1Z-alkenyl)-sn-glycero-3-phosphoethanolamine + (9Z)-octadecenoyl-CoA = 1-O-(1Z)-alkenyl-2-(9Z)-octadecenoyl-sn-glycero-3-phosphoethanolamine + CoA. It carries out the reaction 1-octadecanoyl-sn-glycero-3-phosphoethanolamine + (9Z)-octadecenoyl-CoA = 1-octadecanoyl-2-(9Z-octadecenoyl)-sn-glycero-3-phosphoethanolamine + CoA. It catalyses the reaction 1-(9Z-octadecenoyl)-sn-glycero-3-phospho-L-serine + (9Z)-octadecenoyl-CoA = 1,2-di-(9Z)-octadecenoyl-sn-glycero-3-phospho-L-serine + CoA. The catalysed reaction is 1-(9Z-octadecenoyl)-sn-glycero-3-phosphoethanolamine + (9Z)-octadecenoyl-CoA = 1,2-di-(9Z-octadecenoyl)-sn-glycero-3-phosphoethanolamine + CoA. The enzyme catalyses 1-hexadecanoyl-sn-glycero-3-phosphoethanolamine + (9Z)-octadecenoyl-CoA = 1-hexadecanoyl-2-(9Z-octadecenoyl)-sn-glycero-3-phosphoethanolamine + CoA. It carries out the reaction 1-(10Z-heptadecenoyl)-sn-glycero-3-phosphoethanolamine + hexadecanoyl-CoA = 1-(10Z-heptadecenoyl)-2-hexadecanoyl-sn-glycero-3-phosphoethanolamine + CoA. It catalyses the reaction 1-(9Z-octadecenoyl)-sn-glycero-3-phospho-L-serine + octadecanoyl-CoA = 1-(9Z-octadecenoyl)-2-octadecanoyl-sn-glycero-3-phospho-L-serine + CoA. The catalysed reaction is 1-(9Z-octadecenoyl)-sn-glycero-3-phospho-L-serine + (9Z)-hexadecenoyl-CoA = 1-(9Z-octadecenoyl)-2-(9Z-hexadecenoyl)-sn-glycero-3-phospho-L-serine + CoA. The enzyme catalyses 1-(9Z-octadecenoyl)-sn-glycero-3-phospho-L-serine + (9Z,12Z)-octadecadienoyl-CoA = 1-(9Z-octadecenoyl)-2-(9Z,12Z-octadienoyl)-sn-glycero-3-phospho-L-serine + CoA. It carries out the reaction 1-hexadecanoyl-sn-glycero-3-phosphocholine + (9Z)-octadecenoyl-CoA = 1-hexadecanoyl-2-(9Z-octadecenoyl)-sn-glycero-3-phosphocholine + CoA. It catalyses the reaction 1-(10Z-heptadecenoyl)-sn-glycero-3-phosphoethanolamine + (9Z)-octadecenoyl-CoA = 1-(10Z-heptadecenoyl)-2-(9Z-octadecenoyl)-sn-glycero-3-phosphoethanolamine + CoA. The protein operates within lipid metabolism; phospholipid metabolism. Acyltransferase which catalyzes the transfer of an acyl group from an acyl-CoA towards a lysophospholipid producing a phospholipid and participates in the reacylation step of the phospholipid remodeling pathway also known as the Lands cycle. Acts on lysophosphatidylserine (1-acyl-2-hydroxy-sn-glycero-3-phospho-L-serine or LPS) and lysophosphatidylethanolamine (1-acyl-sn-glycero-3-phosphoethanolamine or LPE), and to a lesser extend lysophosphatidylcholine. Prefers oleoyl-CoA as the acyl donor and 1-oleoyl-LPE as acceptor. May play a role in neurite outgrowth during neuronal differentiation. This is Membrane-bound glycerophospholipid O-acyltransferase 1 from Mus musculus (Mouse).